Consider the following 426-residue polypeptide: Elongation factor Tu, mitochondrial (426 aa).

The N-terminal 27 residues, 1-27 (MFKNLAGSFRAVSRVAFKTRPSLVRSY), are a transit peptide targeting the mitochondrion. The 197-residue stretch at 34–230 (KPHVNIGTIG…AVDEHIPTPT (197 aa)) folds into the tr-type G domain. The segment at 43–50 (GHVDHGKT) is G1. Position 43 to 50 (43 to 50 (GHVDHGKT)) interacts with GTP. The tract at residues 84 to 88 (GITIS) is G2. A G3 region spans residues 105–108 (DCPG). GTP-binding positions include 105 to 109 (DCPGH) and 160 to 163 (NKVD). The interval 160–163 (NKVD) is G4. Residues 198 to 200 (SAL) are G5.

This sequence belongs to the TRAFAC class translation factor GTPase superfamily. Classic translation factor GTPase family. EF-Tu/EF-1A subfamily.

The protein localises to the mitochondrion. Its pathway is protein biosynthesis; polypeptide chain elongation. G-protein that, in its active GTP-bound form, binds to and delivers aminoacyl-tRNA to the A-site of ribosomes during protein biosynthesis. In the presence of a correct codon-anticodon match between the aminoacyl-tRNA and the A-site codon of the ribosome-bound mRNA, the ribosome acts as a GTPase activator and the GTP is hydrolyzed. The inactive GDP-bound form leaves the ribosome and must be recycled before binding another molecule of aminoacyl-tRNA. Required for mitochondrial protein biosynthesis and maintenance of mitochondrial DNA. The sequence is that of Elongation factor Tu, mitochondrial (TUF1) from Meyerozyma guilliermondii (strain ATCC 6260 / CBS 566 / DSM 6381 / JCM 1539 / NBRC 10279 / NRRL Y-324) (Yeast).